The sequence spans 168 residues: ATP synthase subunit b (168 aa).

Residues 9–29 form a helical membrane-spanning segment; that stretch reads AIPFGTIAYTLFIFLILLVML.

It belongs to the ATPase B chain family. In terms of assembly, F-type ATPases have 2 components, F(1) - the catalytic core - and F(0) - the membrane proton channel. F(1) has five subunits: alpha(3), beta(3), gamma(1), delta(1), epsilon(1). F(0) has three main subunits: a(1), b(2) and c(10-14). The alpha and beta chains form an alternating ring which encloses part of the gamma chain. F(1) is attached to F(0) by a central stalk formed by the gamma and epsilon chains, while a peripheral stalk is formed by the delta and b chains.

It is found in the cell membrane. F(1)F(0) ATP synthase produces ATP from ADP in the presence of a proton or sodium gradient. F-type ATPases consist of two structural domains, F(1) containing the extramembraneous catalytic core and F(0) containing the membrane proton channel, linked together by a central stalk and a peripheral stalk. During catalysis, ATP synthesis in the catalytic domain of F(1) is coupled via a rotary mechanism of the central stalk subunits to proton translocation. In terms of biological role, component of the F(0) channel, it forms part of the peripheral stalk, linking F(1) to F(0). The polypeptide is ATP synthase subunit b (Bacillus cereus (strain G9842)).